Here is a 197-residue protein sequence, read N- to C-terminus: Holliday junction branch migration complex subunit RuvA (197 aa).

Residues 1-64 (MYEYIKGKYI…EDFIGVYGFL (64 aa)) are domain I. A domain II region spans residues 65-143 (TKDELSMFKL…IDILEEDDEQ (79 aa)). The segment at 144–148 (TINKV) is flexible linker. Positions 149 to 197 (TDDKKVLEAVAALITLGYSEKEANKVINSCDKNNSLEQIIKEALKYLMK) are domain III.

Belongs to the RuvA family. In terms of assembly, homotetramer. Forms an RuvA(8)-RuvB(12)-Holliday junction (HJ) complex. HJ DNA is sandwiched between 2 RuvA tetramers; dsDNA enters through RuvA and exits via RuvB. An RuvB hexamer assembles on each DNA strand where it exits the tetramer. Each RuvB hexamer is contacted by two RuvA subunits (via domain III) on 2 adjacent RuvB subunits; this complex drives branch migration. In the full resolvosome a probable DNA-RuvA(4)-RuvB(12)-RuvC(2) complex forms which resolves the HJ.

It is found in the cytoplasm. In terms of biological role, the RuvA-RuvB-RuvC complex processes Holliday junction (HJ) DNA during genetic recombination and DNA repair, while the RuvA-RuvB complex plays an important role in the rescue of blocked DNA replication forks via replication fork reversal (RFR). RuvA specifically binds to HJ cruciform DNA, conferring on it an open structure. The RuvB hexamer acts as an ATP-dependent pump, pulling dsDNA into and through the RuvAB complex. HJ branch migration allows RuvC to scan DNA until it finds its consensus sequence, where it cleaves and resolves the cruciform DNA. The chain is Holliday junction branch migration complex subunit RuvA from Clostridium botulinum (strain 657 / Type Ba4).